A 360-amino-acid polypeptide reads, in one-letter code: Cyclin-dependent kinase 10 (360 aa).

The 285-residue stretch at 39–323 folds into the Protein kinase domain; it reads FEKLNRIGEG…AGDCLESSYF (285 aa). ATP is bound by residues 45 to 53 and Lys-68; that span reads IGEGTYGIV. Asp-163 serves as the catalytic Proton acceptor. Residue Thr-196 is modified to Phosphothreonine. The segment at 334–360 is disordered; the sequence is LMPTFPHHRNKRAAPATSEGQSKRCKP.

This sequence belongs to the protein kinase superfamily. CMGC Ser/Thr protein kinase family. CDC2/CDKX subfamily. As to quaternary structure, heterodimer with CCNQ, the interaction is required for kinase activity. Interacts with ETS2. Interacts with PRK2.

The protein localises to the cytoplasm. It is found in the cytoskeleton. Its subcellular location is the cilium basal body. It carries out the reaction L-seryl-[protein] + ATP = O-phospho-L-seryl-[protein] + ADP + H(+). The enzyme catalyses L-threonyl-[protein] + ATP = O-phospho-L-threonyl-[protein] + ADP + H(+). Functionally, cyclin-dependent kinase that phosphorylates the transcription factor ETS2 (in vitro) and positively controls its proteasomal degradation (in cells). Involved in the regulation of actin cytoskeleton organization through the phosphorylation of actin dynamics regulators such as PKN2. Is a negative regulator of ciliogenesis through phosphorylation of PKN2 and promotion of RhoA signaling. The protein is Cyclin-dependent kinase 10 (CDK10) of Homo sapiens (Human).